A 1114-amino-acid chain; its full sequence is Putative surface protein SAV2496/SAV2497 (1114 aa).

Residues 1-50 (MRDKKGPVNKRVDFLSNKLNKYSIRKFTVGTASILIGSLMYLGTQQEAEA) form the signal peptide. Disordered regions lie at residues 76–116 (TNKD…EDTP), 440–473 (KFNP…NPLT), and 496–1088 (EYGP…TGLE). Composition is skewed to basic and acidic residues over residues 96–116 (DTIE…EDTP), 451–461 (KVTREGQKGEK), 505–523 (GHRD…EEVP), 554–570 (SIVE…RKFN), and 579–589 (KVTREGQKGEK). The 83-residue stretch at 419–501 (SAKNNNRIRK…NELTEYGPET (83 aa)) folds into the G5 1 domain. In terms of domain architecture, G5 2 spans 547-628 (YGPVKGDSIV…NELTEYGPET (82 aa)). The span at 590-604 (TTTPTLKNPLTGEII) shows a compositional bias: low complexity. Composition is skewed to basic and acidic residues over residues 605 to 618 (SKGE…KDPI), 632 to 650 (GHRD…EEVP), 681 to 697 (SIVE…RKFN), 706 to 716 (KVTREGQKGEK), 733 to 746 (SKGE…KDPI), 760 to 778 (GHRD…EEVP), 809 to 825 (SIVE…RKFN), 834 to 844 (KVTREGQKGEK), 861 to 874 (SKGE…KDPV), 918 to 929 (KVIEEPVDDVIK), and 946 to 965 (FETK…RVKQ). A G5 3 domain is found at 674–756 (YGPVKGDSIV…NELTEYGPET (83 aa)). Positions 802 to 884 (YGPVKGDSIV…NELTEFGGEK (83 aa)) constitute a G5 4 domain. Positions 930–1012 (HGPKTGTPET…DKIVEFGGEK (83 aa)) constitute a G5 5 domain. Residues 968 to 982 (QPGSKTITTPITVNP) are compositionally biased toward polar residues. A compositionally biased stretch (basic and acidic residues) spans 996 to 1026 (EITKQPVDKIVEFGGEKPKDPKGPENPEKPS). The LPXTG sorting signal signature appears at 1082-1086 (LPKTG). Thr1085 bears the Pentaglycyl murein peptidoglycan amidated threonine mark. Residues 1086 to 1114 (GLESTQKGLIFSSIIGIAGLMLLARRRKN) constitute a propeptide, removed by sortase.

The protein resides in the secreted. Its subcellular location is the cell wall. This is Putative surface protein SAV2496/SAV2497 from Staphylococcus aureus (strain Mu50 / ATCC 700699).